We begin with the raw amino-acid sequence, 1038 residues long: Subtilisin-like protease SBT6.1 (1038 aa).

The first 30 residues, 1–30, serve as a signal peptide directing secretion; it reads MKVLGEASSYPYRSCIIVVFLSVSLFWLRP. A propeptide spans 31 to 181 (removed in mature form); it reads STYHPQQQNL…TTLNWSRHLL (151 aa). N-linked (GlcNAc...) asparagine glycans are attached at residues asparagine 44, asparagine 52, asparagine 171, and asparagine 175. Residues 175-473 enclose the Peptidase S8 domain; sequence NWSRHLLAQK…VDLLESYEIL (299 aa). Residues 182-1000 lie on the Lumenal side of the membrane; the sequence is AQKTQVTSMF…IDMPFLVPTR (819 aa). Aspartate 212 functions as the Charge relay system in the catalytic mechanism. Asparagine 230 carries an N-linked (GlcNAc...) asparagine glycan. The active-site Charge relay system is histidine 243. A glycan (N-linked (GlcNAc...) asparagine) is linked at asparagine 300. Catalysis depends on serine 409, which acts as the Charge relay system. N-linked (GlcNAc...) asparagine glycans are attached at residues asparagine 513, asparagine 579, asparagine 902, and asparagine 954. A helical transmembrane segment spans residues 1001–1021; that stretch reads WIVLAGVVASGVLVLLSIWRI. Topologically, residues 1022–1038 are cytoplasmic; sequence RQKRGRRRRASGSNRLA.

This sequence belongs to the peptidase S8 family. In terms of assembly, interacts with PME1 and PME5. As to expression, expressed in the vasculature of roots, cotyledons and leaves.

Its subcellular location is the golgi apparatus membrane. Functionally, serine protease that catalyzes the first step (site-1 cleavage) in the proteolytic activation of various factors, prior to site-2 cleavage. Part of a regulated intramembrane proteolysis (RIP) cascade. Cleaves BZIP17 and BZIP28 after the Arg-Arg-Ile-Leu (RRIL) motif. May cleave BZIP49 after the RRIL motif. Targets the membrane-associated BZIP17 factor, which functions as a stress sensor and transducer in a signaling pathway that resembles an ER stress response. Following salt stress, BZIP17 is cleaved by SBT6.1 (S1P) and S2P at the C-terminus and the N-terminal bZIP component is translocated to the nucleus, where it activates the expression of salt stress response genes. Cleaves the pectinesterases PME1 after the Arg-Arg-Leu-Met (RRLM) and Arg-Arg-Leu-Leu (RRLL) motifs, and PME5 after the Arg-Arg-Leu-Leu (RRLL) and Arg-Lys-Leu-Met (RKLM) motifs. This processing and C-terminus release occurs in the Golgi apparatus and is required for cell wall targeting of pectinesterases. Thus, SBT6.1 mediates the regulated release of mature pectinesterases from the Golgi. Cleaves the peptide growth factor RALF23 after the Arg-Arg-Ile-Leu (RRIL) motif. This processing is required for RALF23 function in the negative regulation of brassinolide (BL)-mediated signaling pathway (e.g. BL-induced hypocotyl elongation and branching limitation). The polypeptide is Subtilisin-like protease SBT6.1 (Arabidopsis thaliana (Mouse-ear cress)).